The sequence spans 894 residues: Alanine--tRNA ligase (894 aa).

Histidine 587, histidine 591, cysteine 691, and histidine 695 together coordinate Zn(2+). A disordered region spans residues 739–758 (AEGDRAAEEAKGRLQEERDA).

The protein belongs to the class-II aminoacyl-tRNA synthetase family. The cofactor is Zn(2+).

The protein resides in the cytoplasm. It carries out the reaction tRNA(Ala) + L-alanine + ATP = L-alanyl-tRNA(Ala) + AMP + diphosphate. Catalyzes the attachment of alanine to tRNA(Ala) in a two-step reaction: alanine is first activated by ATP to form Ala-AMP and then transferred to the acceptor end of tRNA(Ala). Also edits incorrectly charged Ser-tRNA(Ala) and Gly-tRNA(Ala) via its editing domain. The sequence is that of Alanine--tRNA ligase from Cenarchaeum symbiosum (strain A).